The chain runs to 404 residues: Ubiquitin-like modifier-activating enzyme 5 (404 aa).

ATP is bound by residues Gly-83, Asp-104, Lys-127, Asn-150, and Asn-184. Residues Cys-226 and Cys-229 each contribute to the Zn(2+) site. Cys-250 serves as the catalytic Glycyl thioester intermediate. Cys-303 and Cys-308 together coordinate Zn(2+). The interval 372-393 (APEKSSETSEETVTAATADETS) is disordered. The segment covering 382 to 391 (ETVTAATADE) has biased composition (low complexity).

It belongs to the ubiquitin-activating E1 family. UBA5 subfamily.

Functionally, E1-like enzyme which activates UFM1. The chain is Ubiquitin-like modifier-activating enzyme 5 from Drosophila simulans (Fruit fly).